A 361-amino-acid polypeptide reads, in one-letter code: S-adenosylmethionine:tRNA ribosyltransferase-isomerase (361 aa).

This sequence belongs to the QueA family. In terms of assembly, monomer.

The protein localises to the cytoplasm. The catalysed reaction is 7-aminomethyl-7-carbaguanosine(34) in tRNA + S-adenosyl-L-methionine = epoxyqueuosine(34) in tRNA + adenine + L-methionine + 2 H(+). It participates in tRNA modification; tRNA-queuosine biosynthesis. Transfers and isomerizes the ribose moiety from AdoMet to the 7-aminomethyl group of 7-deazaguanine (preQ1-tRNA) to give epoxyqueuosine (oQ-tRNA). The protein is S-adenosylmethionine:tRNA ribosyltransferase-isomerase of Mesorhizobium japonicum (strain LMG 29417 / CECT 9101 / MAFF 303099) (Mesorhizobium loti (strain MAFF 303099)).